The chain runs to 664 residues: MSELLKITLPDGSVREVAPGSTPADIAAAIGPGLAKAALAAKVDGELVDLTRPFTADAQLALVTAKDEAEALDLARHDYAHVLAEAVQALFPGTQITFGPSTDDGFYYDFAPKDRPFTDEDLPAIEAEMRKIIAANKPLRREVWSREQLISRWKQQGESFKAEWAAELPENEELTVYWSGDDWLDMCRGPHLPSTGKLDPNAFKLTRVSGAYWRGDQKNAMLSRVYGTGWLNKKQLDAHLTRLEEAAKRDHRKLGNEMDLFHLQQEAHGSVFWHPKGYLIWRELEAYMRRAIDGAGYREVKTPQVMDARQWEQSGHWGKYRENMFVIPDEVPNVDDEGPIVSNDADWMALKPMNCPAHVLIFRQGIKSYRELPLRLYENGCCHRNEPHGALHGLMRVRQFTQDDAHIFCREDQIVSEVQAFCELADRIYKHFGFTYSIKLALRPEKRFGTEEMWDKAERELRDAVVRAGLATEEYGWEELPGEGAFYAPKLEWHLTDAIGRTWQVGTIQSDRVLPERLDASYIGEDGEKHRPVMLHRAIFGSYERFIGILIEHFAGRLPVWLAPVQAVVATIVSDADDYARDALAKLKAAGIRADTDLRNEKINYKVREHSLQKVPYLLVVGKREAEEGTVAIRILGEQHQKVMPLDEAIALLKGEATAPDLRA.

In terms of domain architecture, TGS spans 1 to 64 (MSELLKITLP…TADAQLALVT (64 aa)). The segment at 250-559 (DHRKLGNEMD…LIEHFAGRLP (310 aa)) is catalytic. Positions 355, 406, and 536 each coordinate Zn(2+).

This sequence belongs to the class-II aminoacyl-tRNA synthetase family. Homodimer. The cofactor is Zn(2+).

The protein localises to the cytoplasm. It carries out the reaction tRNA(Thr) + L-threonine + ATP = L-threonyl-tRNA(Thr) + AMP + diphosphate + H(+). In terms of biological role, catalyzes the attachment of threonine to tRNA(Thr) in a two-step reaction: L-threonine is first activated by ATP to form Thr-AMP and then transferred to the acceptor end of tRNA(Thr). Also edits incorrectly charged L-seryl-tRNA(Thr). This Novosphingobium aromaticivorans (strain ATCC 700278 / DSM 12444 / CCUG 56034 / CIP 105152 / NBRC 16084 / F199) protein is Threonine--tRNA ligase.